The sequence spans 331 residues: Hydroxyacylglutathione hydrolase 1, mitochondrial (331 aa).

A mitochondrion-targeting transit peptide spans Met1–Ser76. Zn(2+) contacts are provided by His131 and His133. Fe cation is bound by residues Asp135 and His136. Zn(2+)-binding residues include His189 and Asp208. Fe cation is bound at residue Asp208. Arg246 to Asn248 serves as a coordination point for substrate.

It belongs to the metallo-beta-lactamase superfamily. Glyoxalase II family. The cofactor is Fe(2+). It depends on Fe(3+) as a cofactor. Zn(2+) serves as cofactor. As to expression, mainly expressed in roots, flowers and flower buds. Also detected in leaves.

The protein resides in the mitochondrion. It catalyses the reaction an S-(2-hydroxyacyl)glutathione + H2O = a 2-hydroxy carboxylate + glutathione + H(+). The protein operates within secondary metabolite metabolism; methylglyoxal degradation; (R)-lactate from methylglyoxal: step 2/2. Its function is as follows. Thiolesterase that catalyzes the hydrolysis of S-D-lactoyl-glutathione to form glutathione and D-lactic acid. The protein is Hydroxyacylglutathione hydrolase 1, mitochondrial (GLX2-1) of Arabidopsis thaliana (Mouse-ear cress).